We begin with the raw amino-acid sequence, 213 residues long: Flagellar transcriptional regulator FlhC (213 aa).

C138, C141, C158, and C161 together coordinate Zn(2+).

Belongs to the FlhC family. Heterohexamer composed of two FlhC and four FlhD subunits. Each FlhC binds a FlhD dimer, forming a heterotrimer, and a hexamer assembles by dimerization of two heterotrimers. Zn(2+) serves as cofactor.

Its subcellular location is the cytoplasm. Its function is as follows. Functions in complex with FlhD as a master transcriptional regulator that regulates transcription of several flagellar and non-flagellar operons by binding to their promoter region. Activates expression of class 2 flagellar genes, including fliA, which is a flagellum-specific sigma factor that turns on the class 3 genes. Also regulates genes whose products function in a variety of physiological pathways. The chain is Flagellar transcriptional regulator FlhC from Cupriavidus metallidurans (strain ATCC 43123 / DSM 2839 / NBRC 102507 / CH34) (Ralstonia metallidurans).